The following is a 1088-amino-acid chain: Pathogenesis-related homeodomain protein (1088 aa).

8 tandem repeats follow at residues 140-152 (INMGQKETMPEEV), 173-199 (NSYQSGLPPENAVTDCKQVQLGHRSDD), 205-239 (GLVELVIGQKNVAKSPSQLVETGKRGRGRPRKVQT), 240-274 (GLEQLVIGQKTAAKSSSQLGDTGKRSRGRPRKVQN), 283-295 (INMEQKETIPEQV), 316-342 (NSDQSELPPENAAKNCNHAQFGHQSDD), 348-382 (GFKELVIGQETVAKSPSQLVDAGKRGRGRPRKVQT), and 383-417 (GLEQLVPVQETAAKSSSQLGDTGKRSRGRPRKVQD). The segment at 140–295 (INMGQKETMP…EQKETIPEQV (156 aa)) is 2 X 13 AA repeats. Residues 173 to 342 (NSYQSGLPPE…HAQFGHQSDD (170 aa)) are 2 X 27 AA approximate repeats. Residues 205-274 (GLVELVIGQK…SRGRPRKVQN (70 aa)) are 2 X 35 AA approximate tandem repeats (type C). A disordered region spans residues 220–282 (PSQLVETGKR…QNSPTSFLEN (63 aa)). 2 consecutive DNA-binding regions (a.T hook) follow at residues 226–236 (TGKRGRGRPRK) and 261–271 (TGKRSRGRPRK). Residues 272–282 (VQNSPTSFLEN) are compositionally biased toward polar residues. The span at 303-320 (SLTIPTDNQSRTYNSDQS) shows a compositional bias: polar residues. 2 disordered regions span residues 303–343 (SLTI…SDDT) and 363–484 (PSQL…RMEE). The tract at residues 348–417 (GFKELVIGQE…SRGRPRKVQD (70 aa)) is 2 X 35 AA approximate tandem repeats (type C). 2 DNA-binding regions (a.T hook) span residues 369–379 (AGKRGRGRPRK) and 404–414 (TGKRSRGRPRK). The segment at 578-635 (DIFCAKCGSKDVTLSNDIILCDGACDRGFHQFCLDPPLLKEYIPPDDEGWLCPGCECK) adopts a PHD-type zinc-finger fold. 2 disordered regions span residues 667–810 (AASG…PLYP) and 851–901 (EEYG…ARES). A 4-1 repeat occupies 678–693 (GLPSDDSEDDDYDPGG). Positions 678-744 (GLPSDDSEDD…SEDDEYDPSG (67 aa)) are 2 X 16 AA Asp/Glu-rich (acidic) repeats. Acidic residues predominate over residues 705–718 (SSTDESDYQSESDD). The stretch at 729–744 (GLPSDDSEDDEYDPSG) is one 4-2 repeat. 2 stretches are compositionally biased toward basic and acidic residues: residues 788 to 802 (DHVRNNEEGCGHPEQ) and 874 to 901 (NNSDKEATAMERGRESGDLELDQKARES). Residues 935-994 (KSTSKTLHGEHATQRLLQSFKENQYPQRAVKESLAAELALSVRQVSNWFNNRRWSFRHSS) constitute a DNA-binding region (homeobox).

This sequence belongs to the PHD-associated homeobox family.

It is found in the nucleus. Specifically binds to the fungal elicitor-responsive DNA element, 5'-CTAATTGTTTA-3', of the gene PR2 promoter. The sequence is that of Pathogenesis-related homeodomain protein (PRH) from Petroselinum crispum (Parsley).